The sequence spans 673 residues: Annexin A6 (673 aa).

Ala2 is modified (N-acetylalanine). Residue Ser13 is modified to Phosphoserine. Annexin repeat units follow at residues 20–91 (FDAN…NLMR), 92–163 (PLAY…VLLQ), 175–247 (DLVQ…AVVK), 251–322 (STPE…KLCG), 363–434 (FNPD…GLMM), 435–506 (PPAH…SLAT), 521–595 (EDAQ…AIVQ), and 599–670 (NKPL…ALCG). At Tyr30 the chain carries Phosphotyrosine. Lys63, Lys68, Lys75, and Lys81 each carry N6-acetyllysine. Residue Tyr201 is modified to Phosphotyrosine. An N6-acetyllysine mark is found at Lys306, Lys370, and Lys418. Ser422 bears the Phosphoserine mark. Lys483 carries the N6-acetyllysine modification. Ser537 bears the Phosphoserine mark. Position 620 is an N6-acetyllysine (Lys620).

Belongs to the annexin family.

The protein localises to the cytoplasm. It is found in the melanosome. Its function is as follows. May associate with CD21. May regulate the release of Ca(2+) from intracellular stores. The polypeptide is Annexin A6 (Anxa6) (Mus musculus (Mouse)).